Reading from the N-terminus, the 122-residue chain is NADH-quinone oxidoreductase subunit A (122 aa).

Transmembrane regions (helical) follow at residues 10-30 (MIVL…LTLG), 66-86 (IFAL…PWAV), and 91-111 (LGLF…VGLA).

Belongs to the complex I subunit 3 family. As to quaternary structure, NDH-1 is composed of 14 different subunits. Subunits NuoA, H, J, K, L, M, N constitute the membrane sector of the complex.

It localises to the cell membrane. It catalyses the reaction a quinone + NADH + 5 H(+)(in) = a quinol + NAD(+) + 4 H(+)(out). Its function is as follows. NDH-1 shuttles electrons from NADH, via FMN and iron-sulfur (Fe-S) centers, to quinones in the respiratory chain. The immediate electron acceptor for the enzyme in this species is believed to be a menaquinone. Couples the redox reaction to proton translocation (for every two electrons transferred, four hydrogen ions are translocated across the cytoplasmic membrane), and thus conserves the redox energy in a proton gradient. This chain is NADH-quinone oxidoreductase subunit A, found in Bacillus thuringiensis subsp. konkukian (strain 97-27).